Consider the following 604-residue polypeptide: MLARALLLCAALALGQAANPCCSNPCQNRGECLSVGFDRYKCDCTRTGYYGENCTTPEFLTRIKLLLKPTPNTVHYILTHFKGVWNIVNNIPFLRNAIMIYVLTSRSHLIDSPPTYNAHYGYKSWEAFSNLSYYTRALPPVADDCPTPMGVKGKKELPDSNEVLEKVLLRRKFIPDPQGTNMMFAFFAQHFTHQFFKSDQKRGPAFTTGLAHGVDLSHIYGETLDRQHKLRLFKDGKMKYQIIDGEMYPPTVKETQVEMMYPPYIPEHARFAVGQEVFGLVPGLMMYATIWLREHNRVCDVLKQEHPEWDDERLFQTSRLILIGETIKIVIEDYVQHLSGYHFKLKFDPELLFNQQFQYQNRIASEFNTLYHWHPLLPDTFQIDDQVYNFQQFLYNNSILVEHGLTQFVESFTKQIAGRVAGGRNVPLAVQRVAKASIEHSRKMKYQSLNEYRKRFLMKPYTSFEELTGEKEMAAGLEALYGDIDAMELYPALLVEKPRPDAIFGETMVEMGAPFSLKGLMGNPICSPHYWKPSTFGGEVGFQIVNTASIQSLICNNVKGCPVTAFNLPDPQLAKTVTINASASHSRLEDLSPTVLLKGRSTEL.

An N-terminal signal peptide occupies residues 1 to 17 (MLARALLLCAALALGQA). An EGF-like domain is found at 18 to 55 (ANPCCSNPCQNRGECLSVGFDRYKCDCTRTGYYGENCT). Disulfide bonds link Cys21–Cys32, Cys22–Cys145, Cys26–Cys42, and Cys44–Cys54. Residue Asn53 is glycosylated (N-linked (GlcNAc...) asparagine). Substrate is bound at residue Arg106. N-linked (GlcNAc...) asparagine glycosylation occurs at Asn130. His193 acts as the Proton acceptor in catalysis. Position 341 (Tyr341) interacts with substrate. Tyr371 acts as the For cyclooxygenase activity in catalysis. His374 serves as a coordination point for heme b. A glycan (N-linked (GlcNAc...) asparagine) is linked at Asn396. Cys526 bears the S-nitrosocysteine mark. Residues Cys555 and Cys561 are joined by a disulfide bond. N-linked (GlcNAc...) asparagine glycosylation occurs at Asn580.

It belongs to the prostaglandin G/H synthase family. Homodimer. Requires heme b as cofactor. Post-translationally, S-nitrosylation by NOS2 (iNOS) activates enzyme activity. S-nitrosylation may take place on different Cys residues in addition to Cys-526.

It localises to the microsome membrane. The protein localises to the endoplasmic reticulum membrane. It is found in the nucleus inner membrane. The protein resides in the nucleus outer membrane. It carries out the reaction (5Z,8Z,11Z,14Z)-eicosatetraenoate + AH2 + 2 O2 = prostaglandin H2 + A + H2O. The catalysed reaction is (5Z,8Z,11Z,14Z)-eicosatetraenoate + 2 O2 = prostaglandin G2. The enzyme catalyses prostaglandin G2 + AH2 = prostaglandin H2 + A + H2O. It catalyses the reaction (5Z,8Z,11Z,14Z,17Z)-eicosapentaenoate + 2 O2 = prostaglandin G3. It carries out the reaction prostaglandin G3 + AH2 = prostaglandin H3 + A + H2O. The catalysed reaction is (8Z,11Z,14Z)-eicosatrienoate + 2 O2 = prostaglandin G1. The enzyme catalyses prostaglandin G1 + AH2 = prostaglandin H1 + A + H2O. It catalyses the reaction 2-(5Z,8Z,11Z,14Z)-eicosatetraenoyl-sn-glycero-3-phosphoethanolamine + 2 O2 = 2-(prostaglandin G2)-sn-glycero-3-phosphoethanolamine. It carries out the reaction 2-(prostaglandin G2)-sn-glycero-3-phosphoethanolamine + AH2 = 2-(prostaglandin H2)-sn-glycero-3-phosphoethanolamine + A + H2O. The catalysed reaction is 2-(5Z,8Z,11Z,14Z)-eicosatetraenoyl-sn-glycero-3-phosphocholine + 2 O2 = 2-(prostaglandin G2)-sn-glycero-3-phosphocholine. The enzyme catalyses 2-(prostaglandin G2)-sn-glycero-3-phosphocholine + AH2 = 2-(prostaglandin H2)-sn-glycero-3-phosphocholine + A + H2O. It catalyses the reaction (15S)-hydroperoxy-(5Z,8Z,11Z,13E)-eicosatetraenoate + AH2 = (15S)-hydroxy-(5Z,8Z,11Z,13E)-eicosatetraenoate + A + H2O. It carries out the reaction 2-(5Z,8Z,11Z,14Z)-eicosatetraenoyl-sn-glycero-3-phosphocholine + AH2 + O2 = 2-[(15S)-hydroxy-(5Z,8Z,11Z,13E)-eicosatetraenoyl]-sn-glycero-3-phosphocholine + A + H2O. The catalysed reaction is 2-(5Z,8Z,11Z,14Z)-eicosatetraenoyl-sn-glycero-3-phosphocholine + AH2 + O2 = 2-[(15R)-hydroxy-(5Z,8Z,11Z,13E)-eicosatetraenoyl]-sn-glycero-3-phosphocholine + A + H2O. The enzyme catalyses 2-(5Z,8Z,11Z,14Z)-eicosatetraenoyl-sn-glycero-3-phosphocholine + AH2 + O2 = 2-[(11R)-hydroxy-(5Z,8Z,12E,14Z)-eicosatetraenoyl]-sn-glycero-3-phosphocholine + A + H2O. It catalyses the reaction (9Z,12Z)-octadecadienoate + AH2 + O2 = 9-hydroxy-(10E,12Z)-octadecadienoate + A + H2O. It carries out the reaction (9Z,12Z)-octadecadienoate + AH2 + O2 = 13-hydroxy-(9Z,11E)-octadecadienoate + A + H2O. The catalysed reaction is (5Z,8Z,11Z,14Z)-eicosatetraenoate + AH2 + O2 = (15R)-hydroxy-(5Z,8Z,11Z,13E)-eicosatetraenoate + A + H2O. The enzyme catalyses (5Z,8Z,11Z,14Z)-eicosatetraenoate + AH2 + O2 = (11R)-hydroxy-(5Z,8Z,12E,14Z)-eicosatetraenoate + A + H2O. It catalyses the reaction (5Z,8Z,11Z,14Z,17Z)-eicosapentaenoate + AH2 + O2 = (11R)-hydroxy-(5Z,8Z,12E,14Z,17Z)-eicosapentaenoate + A + H2O. It carries out the reaction (5Z,8Z,11Z,14Z,17Z)-eicosapentaenoate + AH2 + O2 = (18S)-hydroxy-(5Z,8Z,11Z,14Z,16E)-eicosapentaenoate + A + H2O. The catalysed reaction is (5Z,8Z,11Z,14Z,17Z)-eicosapentaenoate + AH2 + O2 = (18R)-hydroxy-(5Z,8Z,11Z,14Z,16E)-eicosapentaenoate + A + H2O. The enzyme catalyses (5Z,8Z,11Z,14Z,17Z)-eicosapentaenoate + AH2 + O2 = (15R)-hydroxy-(5Z,8Z,11Z,13E,17Z)-eicosapentaenoate + A + H2O. It catalyses the reaction (5Z,8Z,11Z,14Z,17Z)-eicosapentaenoate + AH2 + O2 = (15S)-hydroxy-(5Z,8Z,11Z,13E,17Z)-eicosapentaenoate + A + H2O. It carries out the reaction (7Z,10Z,13Z,16Z,19Z)-docosapentaenoate + AH2 + O2 = 13R-hydroxy-(7Z,10Z,14E,16Z,19Z)-docosapentaenoate + A + H2O. The catalysed reaction is (4Z,7Z,10Z,13Z,16Z,19Z)-docosahexaenoate + AH2 + O2 = 13-hydroxy-(4Z,7Z,10Z,14E,16Z,19Z)-docosahexaenoate + A + H2O. The enzyme catalyses (5S)-hydroxy-(6E,8Z,11Z,14Z)-eicosatetraenoate + AH2 + O2 = (5S,15R)-dihydroxy-(6E,8Z,11Z,13E)-eicosatetraenoate + A + H2O. It catalyses the reaction (4Z,7Z,10Z,13Z,16Z,19Z)-docosahexaenoate + AH2 + O2 = 17R-hydroxy-(4Z,7Z,10Z,13Z,15E,19Z)-docosahexaenoate + A + H2O. It carries out the reaction (5S)-hydroxy-(6E,8Z,11Z,14Z)-eicosatetraenoate + AH2 + O2 = (5S,15S)-dihydroxy-(6E,8Z,11Z,13E)-eicosatetraenoate + A + H2O. The catalysed reaction is (5S)-hydroxy-(6E,8Z,11Z,14Z)-eicosatetraenoate + AH2 + O2 = (5S,11R)-dihydroxy-(6E,8Z,12E,14Z)-eicosatetraenoate + A + H2O. The enzyme catalyses 2-(5Z,8Z,11Z,14Z-eicosatetraenoyl)-glycerol + 2 O2 = 2-glyceryl-prostaglandin G2. It catalyses the reaction 2-glyceryl-prostaglandin G2 + AH2 = 2-glyceryl-prostaglandin H2 + A + H2O. It carries out the reaction (5Z,8Z,11Z,14Z)-eicosatetraenoate + O2 = (15R)-hydroperoxy-(5Z,8Z,11Z,13E)-eicosatetraenoate. The catalysed reaction is (5Z,8Z,11Z,14Z)-eicosatetraenoate + O2 = 11R-hydroperoxy-(5Z,8Z,12E,14Z)-eicosatetraenoate. The enzyme catalyses (9Z,12Z)-octadecadienoate + AH2 + O2 = (9R)-hydroxy-(10E,12Z)-octadecadienoate + A + H2O. It catalyses the reaction (9Z,12Z)-octadecadienoate + AH2 + O2 = (9S)-hydroxy-(10E,12Z)-octadecadienoate + A + H2O. It carries out the reaction (9Z,12Z)-octadecadienoate + AH2 + O2 = (13S)-hydroxy-(9Z,11E)-octadecadienoate + A + H2O. The catalysed reaction is (9Z,12Z)-octadecadienoate + AH2 + O2 = (13R)-hydroxy-(9Z,11E)-octadecadienoate + A + H2O. It participates in lipid metabolism; prostaglandin biosynthesis. Functionally, dual cyclooxygenase and peroxidase in the biosynthesis pathway of prostanoids, a class of C20 oxylipins mainly derived from arachidonate ((5Z,8Z,11Z,14Z)-eicosatetraenoate, AA, C20:4(n-6)), with a particular role in the inflammatory response. The cyclooxygenase activity oxygenates AA to the hydroperoxy endoperoxide prostaglandin G2 (PGG2), and the peroxidase activity reduces PGG2 to the hydroxy endoperoxide prostaglandin H2 (PGH2), the precursor of all 2-series prostaglandins and thromboxanes. This complex transformation is initiated by abstraction of hydrogen at carbon 13 (with S-stereochemistry), followed by insertion of molecular O2 to form the endoperoxide bridge between carbon 9 and 11 that defines prostaglandins. The insertion of a second molecule of O2 (bis-oxygenase activity) yields a hydroperoxy group in PGG2 that is then reduced to PGH2 by two electrons. Similarly catalyzes successive cyclooxygenation and peroxidation of dihomo-gamma-linoleate (DGLA, C20:3(n-6)) and eicosapentaenoate (EPA, C20:5(n-3)) to corresponding PGH1 and PGH3, the precursors of 1- and 3-series prostaglandins. In an alternative pathway of prostanoid biosynthesis, converts 2-arachidonoyl lysophopholipids to prostanoid lysophopholipids, which are then hydrolyzed by intracellular phospholipases to release free prostanoids. Metabolizes 2-arachidonoyl glycerol yielding the glyceryl ester of PGH2, a process that can contribute to pain response. Generates lipid mediators from n-3 and n-6 polyunsaturated fatty acids (PUFAs) via a lipoxygenase-type mechanism. Oxygenates PUFAs to hydroperoxy compounds and then reduces them to corresponding alcohols. Plays a role in the generation of resolution phase interaction products (resolvins) during both sterile and infectious inflammation. Metabolizes docosahexaenoate (DHA, C22:6(n-3)) to 17R-HDHA, a precursor of the D-series resolvins (RvDs). As a component of the biosynthetic pathway of E-series resolvins (RvEs), converts eicosapentaenoate (EPA, C20:5(n-3)) primarily to 18S-HEPE that is further metabolized by ALOX5 and LTA4H to generate 18S-RvE1 and 18S-RvE2. In vascular endothelial cells, converts docosapentaenoate (DPA, C22:5(n-3)) to 13R-HDPA, a precursor for 13-series resolvins (RvTs) shown to activate macrophage phagocytosis during bacterial infection. In activated leukocytes, contributes to oxygenation of hydroxyeicosatetraenoates (HETE) to diHETES (5,15-diHETE and 5,11-diHETE). Can also use linoleate (LA, (9Z,12Z)-octadecadienoate, C18:2(n-6)) as substrate and produce hydroxyoctadecadienoates (HODEs) in a regio- and stereospecific manner, being (9R)-HODE ((9R)-hydroxy-(10E,12Z)-octadecadienoate) and (13S)-HODE ((13S)-hydroxy-(9Z,11E)-octadecadienoate) its major products. During neuroinflammation, plays a role in neuronal secretion of specialized preresolving mediators (SPMs) 15R-lipoxin A4 that regulates phagocytic microglia. This is Prostaglandin G/H synthase 2 (PTGS2) from Cavia porcellus (Guinea pig).